A 377-amino-acid chain; its full sequence is tRNA-splicing endonuclease subunit SEN2 (377 aa).

Residues 119 to 174 (ETEMTLEKVTQQRRLQRLEFKKERAKLERELLELRKKGGHIDEENILLEKQRESLR) are a coiled coil. Active-site residues include Y289, H297, and K328.

Belongs to the tRNA-intron endonuclease family. Heterotetramer composed of SEN2, SEN15, SEN34 and SEN54. Interacts directly with SEN54.

The protein resides in the nucleus. It localises to the endomembrane system. Its subcellular location is the mitochondrion outer membrane. It catalyses the reaction pretRNA = a 3'-half-tRNA molecule with a 5'-OH end + a 5'-half-tRNA molecule with a 2',3'-cyclic phosphate end + an intron with a 2',3'-cyclic phosphate and a 5'-hydroxyl terminus.. Its function is as follows. Constitutes one of the two catalytic subunit of the tRNA-splicing endonuclease complex, a complex responsible for identification and cleavage of the splice sites in pre-tRNA. It cleaves pre-tRNA at the 5'- and 3'-splice sites to release the intron. The products are an intron and two tRNA half-molecules bearing 2',3'-cyclic phosphate and 5'-OH termini. There are no conserved sequences at the splice sites, but the intron is invariably located at the same site in the gene, placing the splice sites an invariant distance from the constant structural features of the tRNA body. This subunit may anchor the endonuclease complex to the nuclear membrane. Probably carries the active site for 5'-splice site cleavage. This is tRNA-splicing endonuclease subunit SEN2 (SEN2) from Saccharomyces cerevisiae (strain ATCC 204508 / S288c) (Baker's yeast).